The following is a 48-amino-acid chain: Putative ATP synthase protein 8-like protein (48 aa).

The chain crosses the membrane as a helical span at residues G17–L37.

The protein belongs to the ATPase protein 8 family.

The protein localises to the membrane. The protein is Putative ATP synthase protein 8-like protein of Eremothecium gossypii (strain ATCC 10895 / CBS 109.51 / FGSC 9923 / NRRL Y-1056) (Yeast).